Consider the following 674-residue polypeptide: MLRPWFCFRSCVSLLSNRRQYGFRYLATAEPSKSEKPAKPVKPAKPMSVQEKKMRLGQDQFRKELEERISKIPIQNYRNFSIVAHVDHGKSTLSDRLLELTGVIEPGSKSQVLDKLDVERERGITVKAQTVSMLYTEPASGQDYLLHLVDTPGHVDFRAEVSRSYASCGGALLLVDASQGVQAQTVANFFLAYSMDLKLIPIINKIDLDLANIPRAMEQVETTFELDPADCIPVSAKTGLNVEKIIPSIIKNIPAPVGDESRPLKALLVDSWHDPYVGVVMLVHVVDGKLKKGTKLLSAHTNKTYDVKEVGIMYPDRTPMEYIKAGQVAYVIPGMKNPREALVGDTFFQLGKSEGLDPLPGFEEPQPMVFVGAFPSEGKDFSIMDDSIQNLVLNDRSVHLEKETSNALGSGWRLGFLGSLHASVFKERLEKEYGAKIILTAPTVPYKIVFKNGDEKIITNPDEFPDNKMHNLVSHYMEPYVETIMTLPNEYVGTVMQLCLSNRGEQKEVEYLNTGQTLLRYDIPMAQLVEDFFGKLKGCTKGYASLDYEDAGYRKSDIVKMELCVNGEPQDALTTIVHKSIAQAKGKEYVTRFKKFLRYQLFEVAIQARVNNKVIARETIKAKRKDVTQKLHAADISRYKKLLERQKEGKKQMKAVGRINIGNDAYQAFLRRDN.

Residues 1-33 (MLRPWFCFRSCVSLLSNRRQYGFRYLATAEPSK) constitute a mitochondrion transit peptide. The interval 32 to 51 (SKSEKPAKPVKPAKPMSVQE) is disordered. The region spanning 75 to 257 (QNYRNFSIVA…SIIKNIPAPV (183 aa)) is the tr-type G domain. GTP contacts are provided by residues 84-91 (AHVDHGKS), 150-154 (DTPGH), and 204-207 (NKID).

The protein belongs to the TRAFAC class translation factor GTPase superfamily. Classic translation factor GTPase family. LepA subfamily.

Its subcellular location is the mitochondrion inner membrane. It carries out the reaction GTP + H2O = GDP + phosphate + H(+). Promotes mitochondrial protein synthesis. May act as a fidelity factor of the translation reaction, by catalyzing a one-codon backward translocation of tRNAs on improperly translocated ribosomes. Binds to mitochondrial ribosomes in a GTP-dependent manner. The chain is Translation factor GUF1, mitochondrial from Lodderomyces elongisporus (strain ATCC 11503 / CBS 2605 / JCM 1781 / NBRC 1676 / NRRL YB-4239) (Yeast).